We begin with the raw amino-acid sequence, 163 residues long: NADH-quinone oxidoreductase subunit I (163 aa).

2 consecutive 4Fe-4S ferredoxin-type domains span residues 53–83 (LRRY…IEAG) and 94–123 (VRYD…EGPN). Residues cysteine 63, cysteine 66, cysteine 69, cysteine 73, cysteine 103, cysteine 106, cysteine 109, and cysteine 113 each contribute to the [4Fe-4S] cluster site.

Belongs to the complex I 23 kDa subunit family. In terms of assembly, NDH-1 is composed of 14 different subunits. Subunits NuoA, H, J, K, L, M, N constitute the membrane sector of the complex. [4Fe-4S] cluster serves as cofactor.

It is found in the cell inner membrane. The catalysed reaction is a quinone + NADH + 5 H(+)(in) = a quinol + NAD(+) + 4 H(+)(out). In terms of biological role, NDH-1 shuttles electrons from NADH, via FMN and iron-sulfur (Fe-S) centers, to quinones in the respiratory chain. The immediate electron acceptor for the enzyme in this species is believed to be ubiquinone. Couples the redox reaction to proton translocation (for every two electrons transferred, four hydrogen ions are translocated across the cytoplasmic membrane), and thus conserves the redox energy in a proton gradient. This is NADH-quinone oxidoreductase subunit I from Brucella anthropi (strain ATCC 49188 / DSM 6882 / CCUG 24695 / JCM 21032 / LMG 3331 / NBRC 15819 / NCTC 12168 / Alc 37) (Ochrobactrum anthropi).